The chain runs to 549 residues: Probable protein kinase UbiB (549 aa).

The Protein kinase domain occupies 123–501 (DFDETPLASA…QQQAHKSNYL (379 aa)). ATP contacts are provided by residues 129-137 (LASASISQV) and K152. D287 (proton acceptor) is an active-site residue. The next 2 helical transmembrane spans lie at 498-518 (SNYL…LFNQ) and 520-540 (ATLW…IIGW).

It belongs to the ABC1 family. UbiB subfamily.

It localises to the cell inner membrane. It participates in cofactor biosynthesis; ubiquinone biosynthesis [regulation]. Functionally, is probably a protein kinase regulator of UbiI activity which is involved in aerobic coenzyme Q (ubiquinone) biosynthesis. In Shewanella sp. (strain ANA-3), this protein is Probable protein kinase UbiB.